A 307-amino-acid polypeptide reads, in one-letter code: Melanoma-associated antigen F1 (307 aa).

Positions 1–55 (MLQTPESRGLPVPQAEGEKDGGHDGETRAPTASQERPKEELGAGREEGAAEPALT) are disordered. Basic and acidic residues-rich tracts occupy residues 16-27 (EGEKDGGHDGET) and 35-48 (ERPK…REEG). The MAGE domain maps to 76–277 (LNRTVAELVQ…HWPVQYREAL (202 aa)).

As to quaternary structure, interacts (via MAGE domain) with RING-type zinc finger-containing E3 ubiquitin-protein ligases LNX1, TRIM27 and NSMCE1; the interaction is direct. Ubiquitous.

Functionally, enhances ubiquitin ligase activity of RING-type zinc finger-containing E3 ubiquitin ligases. Proposed to act through recruitment and/or stabilization of the E2 ubiquitin-conjugating enzyme at the E3:substrate complex. MAGEF1-NSMCE1 ubiquitin ligase complex promotes proteasomal degradation of MMS19, a key component of the cytosolic iron-sulfur protein assembly (CIA) machinery. Down-regulation of MMS19 impairs the activity of several DNA repair and metabolism enzymes such as ERCC2/XPD, FANCJ, RTEL1 and POLD1 that require iron-sulfur clusters as cofactors. May negatively regulate genome integrity by inhibiting homologous recombination-mediated double-strand break DNA repair. The sequence is that of Melanoma-associated antigen F1 from Homo sapiens (Human).